Reading from the N-terminus, the 306-residue chain is MPAKMHSNYPSDSETAELRDSTESGYVSGGSSEEYLPEIVFTKPHLQFLNRQLQFLEPQDVLRWCVTSLPHLYQTTAFGLTGLVIMDMLSKLSIPRPQMVNLIFLDTLHHFPETLKLVDNVRKRYPLQHIHVYKPQGVETEEEFAKKHGERLWEKDDQLYDWIAKVEPAQRAYRELNVHAVLTGRRRSQGGKRGDLDIIEVDEAGLIKINPLANWTFDQVKQYVKENDIPYNELLDKGYKSVGDYHSTSPVKENEDERSGRWKGQAKTECGIHNPRSKYAQYLMDMERKRQEEALSQALQNKLTTA.

Disordered regions lie at residues 1-30 (MPAKMHSNYPSDSETAELRDSTESGYVSGG) and 245-266 (YHSTSPVKENEDERSGRWKGQA).

The protein belongs to the PAPS reductase family. CysH subfamily.

It catalyses the reaction [thioredoxin]-disulfide + sulfite + adenosine 3',5'-bisphosphate + 2 H(+) = [thioredoxin]-dithiol + 3'-phosphoadenylyl sulfate. It participates in sulfur metabolism; hydrogen sulfide biosynthesis; sulfite from sulfate: step 3/3. In terms of biological role, the NADP dependent reduction of PAPS into sulfite involves thioredoxin which probably plays the role of a thiol carrier. This is Phosphoadenosine phosphosulfate reductase (sA) from Emericella nidulans (strain FGSC A4 / ATCC 38163 / CBS 112.46 / NRRL 194 / M139) (Aspergillus nidulans).